The sequence spans 210 residues: Large ribosomal subunit protein uL3 (210 aa).

Residues 131–154 (GPMSHGSKYHRRVGSMGATTDPGR) are disordered.

It belongs to the universal ribosomal protein uL3 family. Part of the 50S ribosomal subunit. Forms a cluster with proteins L14 and L19.

In terms of biological role, one of the primary rRNA binding proteins, it binds directly near the 3'-end of the 23S rRNA, where it nucleates assembly of the 50S subunit. This chain is Large ribosomal subunit protein uL3, found in Thermoanaerobacter pseudethanolicus (strain ATCC 33223 / 39E) (Clostridium thermohydrosulfuricum).